Consider the following 141-residue polypeptide: Nucleoside triphosphatase NudI (141 aa).

The 141-residue stretch at 1–141 (MRQRTIVCPL…RKTLRLKGLL (141 aa)) folds into the Nudix hydrolase domain. Positions 38–59 (GGVEPGERIEEALRREIREELG) match the Nudix box motif.

The protein belongs to the Nudix hydrolase family. NudI subfamily. As to quaternary structure, monomer. The cofactor is Mg(2+).

The catalysed reaction is a ribonucleoside 5'-triphosphate + H2O = a ribonucleoside 5'-phosphate + diphosphate + H(+). It catalyses the reaction a 2'-deoxyribonucleoside 5'-triphosphate + H2O = a 2'-deoxyribonucleoside 5'-phosphate + diphosphate + H(+). It carries out the reaction dUTP + H2O = dUMP + diphosphate + H(+). The enzyme catalyses dTTP + H2O = dTMP + diphosphate + H(+). The catalysed reaction is dCTP + H2O = dCMP + diphosphate + H(+). In terms of biological role, catalyzes the hydrolysis of nucleoside triphosphates, with a preference for pyrimidine deoxynucleoside triphosphates (dUTP, dTTP and dCTP). This is Nucleoside triphosphatase NudI from Escherichia coli O6:K15:H31 (strain 536 / UPEC).